The chain runs to 76 residues: Conotoxin VnMSGL-0112 (76 aa).

The N-terminal stretch at M1–S20 is a signal peptide. The propeptide occupies H21–R45. 3 disulfides stabilise this stretch: C49–C61, C53–C70, and C60–C74.

Belongs to the conotoxin O3 superfamily. As to expression, expressed by the venom duct.

The protein resides in the secreted. The polypeptide is Conotoxin VnMSGL-0112 (Conus ventricosus (Mediterranean cone)).